We begin with the raw amino-acid sequence, 362 residues long: Meiotic recombination protein SPO11-1 (362 aa).

In terms of domain architecture, Topo IIA-type catalytic spans 8 to 142 (SESTNLLQRI…LNVVSVGNGL (135 aa)). Y103 serves as the catalytic O-(5'-phospho-DNA)-tyrosine intermediate. Residues E189 and D241 each coordinate Mg(2+).

This sequence belongs to the TOP6A family. Heterotetramer of 2 SPO11 (SPO11-1 and/or SPO11-2) and 2 MTOPVIB chains. Interacts with MTOPVIB. May form a heterodimer with SPO11-2. Interacts with PRD1. Does not interact with TOP6B. It depends on Mg(2+) as a cofactor. As to expression, expressed in shoots, young seedlings, flowers and reproductive tissues. Not found in roots or rosette leaves.

It is found in the nucleus. It carries out the reaction ATP-dependent breakage, passage and rejoining of double-stranded DNA.. Component of a topoisomerase 6 complex specifically required for meiotic recombination. Together with MTOPVIB, mediates DNA cleavage that forms the double-strand breaks (DSB) that initiate meiotic recombination. The complex promotes relaxation of negative and positive supercoiled DNA and DNA decatenation through cleavage and ligation cycles. This chain is Meiotic recombination protein SPO11-1, found in Arabidopsis thaliana (Mouse-ear cress).